We begin with the raw amino-acid sequence, 122 residues long: UPF0102 protein CE1920 (122 aa).

This sequence belongs to the UPF0102 family.

In Corynebacterium efficiens (strain DSM 44549 / YS-314 / AJ 12310 / JCM 11189 / NBRC 100395), this protein is UPF0102 protein CE1920.